The sequence spans 447 residues: UDP-glucosyl transferase 79T1 (447 aa).

The Proton acceptor role is filled by His18. Asp116 serves as the catalytic Charge relay. UDP contacts are provided by Ser265, Trp323, Val324, His341, Thr346, and Glu349.

This sequence belongs to the UDP-glycosyltransferase family. Mainly expressed in flowers, flower buds and young leaves, and, to a lesser extent, in old leaves, stems and roots.

Its pathway is secondary metabolite biosynthesis; terpenoid biosynthesis. In terms of biological role, component of the oleanane-type triterpene saponins (e.g. saponarioside A and saponarioside B) biosynthetic pathway, leading to the production of natural products with detergent properties used as traditional sources of soap. A glycosyltransferase that mediates the conversion of QA-triF to QA-triFR via the elongation of the C-28 sugar chain with a deoxyhexose on the D-fucose moiety. In Saponaria officinalis (Common soapwort), this protein is UDP-glucosyl transferase 79T1.